The sequence spans 140 residues: MEIDYYDYEKLLEKAYEELPENVKHHKSRFEVPGALVTIEGNKTIIENFKDIAEALNRDPQHLLKFLLREIATAGTLEGKRVVLQGRFTPYLIANKIKKYIKEYVICPVCGSPDTKIIKRDRFYFLKCEACGAETPIQHL.

Belongs to the eIF-2-beta/eIF-5 family. Heterotrimer composed of an alpha, a beta and a gamma chain.

Its function is as follows. eIF-2 functions in the early steps of protein synthesis by forming a ternary complex with GTP and initiator tRNA. This chain is Translation initiation factor 2 subunit beta (eif2b), found in Pyrococcus abyssi (strain GE5 / Orsay).